The sequence spans 185 residues: dCTP deaminase (185 aa).

DCTP-binding positions include 107–112 (KSTYAR), 131–133 (TLE), Gln-152, Tyr-166, and Gln-176. Glu-133 (proton donor/acceptor) is an active-site residue.

It belongs to the dCTP deaminase family. In terms of assembly, homotrimer.

The enzyme catalyses dCTP + H2O + H(+) = dUTP + NH4(+). The protein operates within pyrimidine metabolism; dUMP biosynthesis; dUMP from dCTP (dUTP route): step 1/2. Functionally, catalyzes the deamination of dCTP to dUTP. In Neorickettsia sennetsu (strain ATCC VR-367 / Miyayama) (Ehrlichia sennetsu), this protein is dCTP deaminase.